The primary structure comprises 70 residues: Frenatin 4.1 (70 aa).

An N-terminal signal peptide occupies residues 1-22; the sequence is MAFLKKSLFLVLFLGLVNLSIC. A propeptide spanning residues 23–46 is cleaved from the precursor; sequence EEEKREEENKEEEDENEALSEVKR. K68 is modified (lysine amide).

It belongs to the frog skin active peptide (FSAP) family. Frenatin subfamily. As to expression, expressed by the skin glands.

It is found in the secreted. Its subcellular location is the target cell membrane. Its function is as follows. Peptide with unknown function. Does not show antimicrobial activity against S.aureus (MIC&gt;512 ug/mL), E.coli (MIC&gt;512 ug/mL) and C.albicans (MIC&gt;512 ug/mL). Does not show hemolytic activity. Functionally, antimicrobial peptide with activity against E.coli (MIC=128 ug/mL or 54 uM) and C.albicans (MIC=256 ug/mL or 108 uM). Does not show activity against S.aureus (MIC&gt;512 ug/mL). Does not show hemolytic activity. This chain is Frenatin 4.1, found in Nyctimystes infrafrenatus (White-lipped tree frog).